A 386-amino-acid chain; its full sequence is 8-amino-7-oxononanoate synthase (386 aa).

A substrate-binding site is contributed by Arg26. 104 to 105 contacts pyridoxal 5'-phosphate; the sequence is GY. His129 contributes to the substrate binding site. Ser176, His204, and Thr232 together coordinate pyridoxal 5'-phosphate. Lys235 is subject to N6-(pyridoxal phosphate)lysine. Thr349 contacts substrate.

This sequence belongs to the class-II pyridoxal-phosphate-dependent aminotransferase family. BioF subfamily. Homodimer. Pyridoxal 5'-phosphate is required as a cofactor.

It carries out the reaction 6-carboxyhexanoyl-[ACP] + L-alanine + H(+) = (8S)-8-amino-7-oxononanoate + holo-[ACP] + CO2. It participates in cofactor biosynthesis; biotin biosynthesis. Its function is as follows. Catalyzes the decarboxylative condensation of pimeloyl-[acyl-carrier protein] and L-alanine to produce 8-amino-7-oxononanoate (AON), [acyl-carrier protein], and carbon dioxide. The polypeptide is 8-amino-7-oxononanoate synthase (Chromohalobacter salexigens (strain ATCC BAA-138 / DSM 3043 / CIP 106854 / NCIMB 13768 / 1H11)).